A 516-amino-acid polypeptide reads, in one-letter code: Maturase K (516 aa).

It belongs to the intron maturase 2 family. MatK subfamily.

The protein resides in the plastid. The protein localises to the chloroplast. Its function is as follows. Usually encoded in the trnK tRNA gene intron. Probably assists in splicing its own and other chloroplast group II introns. The sequence is that of Maturase K from Chara connivens (Convergent stonewort).